We begin with the raw amino-acid sequence, 280 residues long: Ribosomal RNA-processing protein 7 homolog A (280 aa).

The 101-residue stretch at 59 to 159 (RTLFVLNVPP…SGIHKWISDY (101 aa)) folds into the RRM domain. S99 carries the phosphoserine modification.

The protein belongs to the RRP7 family. As to quaternary structure, part of the small subunit (SSU) processome, composed of more than 70 proteins and the RNA chaperone small nucleolar RNA (snoRNA) U3. Interacts with NOL6; required for NOL6 localization to nucleolus. As to expression, expressed in the apical radial glial cells in the developing brain.

The protein resides in the nucleus. It is found in the nucleolus. The protein localises to the cell projection. It localises to the cilium. Its subcellular location is the cytoplasm. The protein resides in the cytoskeleton. It is found in the microtubule organizing center. The protein localises to the centrosome. Functionally, nucleolar protein that is involved in ribosomal RNA (rRNA) processing. Also plays a role in primary cilia resorption, and cell cycle progression in neurogenesis and neocortex development. Part of the small subunit (SSU) processome, first precursor of the small eukaryotic ribosomal subunit. During the assembly of the SSU processome in the nucleolus, many ribosome biogenesis factors, an RNA chaperone and ribosomal proteins associate with the nascent pre-rRNA and work in concert to generate RNA folding, modifications, rearrangements and cleavage as well as targeted degradation of pre-ribosomal RNA by the RNA exosome. In Homo sapiens (Human), this protein is Ribosomal RNA-processing protein 7 homolog A.